The chain runs to 280 residues: uncharacterized protein (280 aa).

7 consecutive transmembrane segments (helical) span residues 6–26 (YLVI…TPLV), 38–58 (VLAI…YLFP), 79–99 (IFLL…VFLK), 105–125 (GVLA…ELIF), 144–164 (NQIY…IILW), 171–191 (ISFF…ALMV), and 231–251 (LVFI…TLFA).

It localises to the cell membrane. This is an uncharacterized protein from Mycoplasma genitalium (strain ATCC 33530 / DSM 19775 / NCTC 10195 / G37) (Mycoplasmoides genitalium).